A 38-amino-acid polypeptide reads, in one-letter code: Toxic protein TimP (38 aa).

The hydrophobic stretch at 1-20 threads the membrane; it reads MKVRCFCVVLLVSGTLCLHA.

Belongs to the TimP toxin family.

The protein localises to the cell inner membrane. Functionally, toxic component of a probable type I toxin-antitoxin (TA) system. Neutralized by sRNA antitoxin TimR which binds to the 5' UTR of timP mRNA and inhibits translation. When TimP is expressed from its promoter in the absence of antitoxin leads to mild cell stress; overexpression in situ is toxic to the cell and causes membrane leakage. The antitoxin gene is encoded immediately upstream and transcribed divergently from the toxin gene; antitoxin RNA is less stable than timP mRNA. The chain is Toxic protein TimP from Salmonella typhimurium (strain SL1344).